A 98-amino-acid chain; its full sequence is NADH-ubiquinone oxidoreductase chain 4L (98 aa).

3 helical membrane passes run methionine 1–methionine 21, histidine 25–threonine 45, and alanine 67–valine 87.

The protein belongs to the complex I subunit 4L family. As to quaternary structure, core subunit of respiratory chain NADH dehydrogenase (Complex I) which is composed of 45 different subunits.

The protein localises to the mitochondrion inner membrane. The enzyme catalyses a ubiquinone + NADH + 5 H(+)(in) = a ubiquinol + NAD(+) + 4 H(+)(out). Functionally, core subunit of the mitochondrial membrane respiratory chain NADH dehydrogenase (Complex I) which catalyzes electron transfer from NADH through the respiratory chain, using ubiquinone as an electron acceptor. Part of the enzyme membrane arm which is embedded in the lipid bilayer and involved in proton translocation. The polypeptide is NADH-ubiquinone oxidoreductase chain 4L (MT-ND4L) (Talpa europaea (European mole)).